The following is a 112-amino-acid chain: ATP synthase subunit c (112 aa).

2 consecutive transmembrane segments (helical) span residues F36–M56 and M81–I101.

The protein belongs to the ATPase C chain family. As to quaternary structure, F-type ATPases have 2 components, F(1) - the catalytic core - and F(0) - the membrane proton channel. F(1) has five subunits: alpha(3), beta(3), gamma(1), delta(1), epsilon(1). F(0) has three main subunits: a(1), b(2) and c(10-14). The alpha and beta chains form an alternating ring which encloses part of the gamma chain. F(1) is attached to F(0) by a central stalk formed by the gamma and epsilon chains, while a peripheral stalk is formed by the delta and b chains.

It is found in the cell inner membrane. In terms of biological role, f(1)F(0) ATP synthase produces ATP from ADP in the presence of a proton or sodium gradient. F-type ATPases consist of two structural domains, F(1) containing the extramembraneous catalytic core and F(0) containing the membrane proton channel, linked together by a central stalk and a peripheral stalk. During catalysis, ATP synthesis in the catalytic domain of F(1) is coupled via a rotary mechanism of the central stalk subunits to proton translocation. The sequence is that of ATP synthase subunit c from Campylobacter jejuni subsp. jejuni serotype O:2 (strain ATCC 700819 / NCTC 11168).